A 311-amino-acid polypeptide reads, in one-letter code: 1,4-dihydroxy-2-naphthoate octaprenyltransferase (311 aa).

The next 9 membrane-spanning stretches (helical) occupy residues 31–51 (LTASFVPVLLGTVLAMFYVKV), 53–73 (LLLFLAMLFSCLWIQIATNLF), 104–126 (TILQLALASYGIAILLGVYICAS), 131–153 (LALIGLVGMAIGYLYTGGPLPIA), 157–177 (FGELFSGICMGSVFVLISFFI), 182–202 (INMQSILISIPIAILVGAINL), 220–240 (LAILMGHKGAVTLLAASFAVA), 242–262 (IWVVGLVITGAASPWLFVVFL), and 290–310 (TAQTNTFFGFLLSIGLLISYF).

Belongs to the MenA family. Type 1 subfamily.

It localises to the cell membrane. It carries out the reaction an all-trans-polyprenyl diphosphate + 1,4-dihydroxy-2-naphthoate + H(+) = a 2-demethylmenaquinol + CO2 + diphosphate. It participates in quinol/quinone metabolism; menaquinone biosynthesis; menaquinol from 1,4-dihydroxy-2-naphthoate: step 1/2. Its function is as follows. Conversion of 1,4-dihydroxy-2-naphthoate (DHNA) to demethylmenaquinone (DMK). This is 1,4-dihydroxy-2-naphthoate octaprenyltransferase from Bacillus subtilis (strain 168).